We begin with the raw amino-acid sequence, 1052 residues long: Kinesin-like protein KIF11 (1052 aa).

One can recognise a Kinesin motor domain in the interval 17–358 (NIQVVVRCRP…LEYAHRAKNI (342 aa)). 104 to 111 (GQTGTGKT) provides a ligand contact to ATP. At K145 the chain carries N6-acetyllysine. Residues 364–478 (VNQKLTKKAL…ETKLQLVKEE (115 aa)) are a coiled coil. The residue at position 457 (T457) is a Phosphothreonine. K476 is covalently cross-linked (Glycyl lysine isopeptide (Lys-Gly) (interchain with G-Cter in SUMO2)). A Phosphothreonine modification is found at T925. Disordered regions lie at residues 950 to 1026 (LQKK…LNPV) and 1033 to 1052 (EASD…SINL). Positions 963-988 (EASKETSQDMDEEREALEQCTEELVS) form a coiled coil. The span at 1016-1026 (KDKENRGLNPV) shows a compositional bias: basic and acidic residues.

It belongs to the TRAFAC class myosin-kinesin ATPase superfamily. Kinesin family. BimC subfamily. In terms of assembly, interacts with the thyroid hormone receptor in the presence of thyroid hormone. Component of a large chromatin remodeling complex, at least composed of MYSM1, PCAF, RBM10 and KIF11/TRIP5. Interacts with RARRES1 and AGBL2. Post-translationally, phosphorylated exclusively on serine during S phase, but on both serine and Thr-925 during mitosis, so controlling the association of KIF11 with the spindle apparatus (probably during early prophase).

The protein resides in the cytoplasm. The protein localises to the cytoskeleton. It localises to the spindle pole. Its function is as follows. Motor protein required for establishing a bipolar spindle during mitosis. Required in non-mitotic cells for transport of secretory proteins from the Golgi complex to the cell surface. This chain is Kinesin-like protein KIF11 (Kif11), found in Mus musculus (Mouse).